Reading from the N-terminus, the 76-residue chain is uncharacterized protein (76 aa).

This is an uncharacterized protein from African swine fever virus (isolate Tick/Malawi/Lil 20-1/1983) (ASFV).